The primary structure comprises 257 residues: UPF0246 protein KPK_4750 (257 aa).

The protein belongs to the UPF0246 family.

This is UPF0246 protein KPK_4750 from Klebsiella pneumoniae (strain 342).